The primary structure comprises 392 residues: Na(+)/H(+) antiporter NhaA (392 aa).

Transmembrane regions (helical) follow at residues Ala14 to Leu34, Leu59 to Val79, Ile95 to Phe115, Gly125 to Gly145, Val154 to Phe174, Val179 to Trp199, Leu213 to Val233, Gly254 to Val274, Leu287 to Phe307, Ile328 to Leu348, and Leu363 to Ala383.

Belongs to the NhaA Na(+)/H(+) (TC 2.A.33) antiporter family.

Its subcellular location is the cell inner membrane. The catalysed reaction is Na(+)(in) + 2 H(+)(out) = Na(+)(out) + 2 H(+)(in). In terms of biological role, na(+)/H(+) antiporter that extrudes sodium in exchange for external protons. The polypeptide is Na(+)/H(+) antiporter NhaA (Yersinia enterocolitica serotype O:8 / biotype 1B (strain NCTC 13174 / 8081)).